A 1337-amino-acid chain; its full sequence is MEHRYNVFNDTPRGNHWMGSSVSGSPRPSYSSRPNVNTTRRFQYSDDEPAEKIRPLRSRSFKSTESNISDEKSRISERDSKDRYINGDKKVDIYSLPLISTDVLEISKQRTFAVILFLIIQCYKIYDLVILKSGLPLSGLLFKNYRFNFISKYFIIDSFFLYVLPSFNIPRLTFKPWVVYLQILAMLLLNIFISSDHEFVLISLIMTTWRKLYTKELSVTGSAINHHRIFDSSAHFKGALTIKILPENTAMFNPLHESYCLPMDTNLFKINSIDVPIRINSTEEIEYIELEYRDLYTNSVELRSLSKKDFKIIDNPKSFLKKDQSVLKSHSNDFEEGSTIRYLAVTLQDIGFYQIKKIVDSKKLNLKIHQSHLVVPYCPIASITGTGSNDRCIGDSDNVSFEIQGVPPMKLAYSKIVNGQTFSYVDSSLQPEYFESPLQSSKSKQSFTQGELNDLKWGRNQPVNINLDSSITQDGKFAYKIDKITDGLGNVVDFTSLPEELKKRYDLSYNFNVHEVPRAALEERFDPKSPTKRSIAIVFEEIKNWISDIPYVISLSYTDAQDKSKKIMNVTTDSLTKVLQADLPGSYNLEYIESKFCPGEIVGKSNVLVTMPVAPTMEVKSFPILDQCVGQVGLNFELSFTGAPPYYYNTKIYKLENGERKLYDAKRYTSEGTRNRFSYSPPKEGNYEIVFDTVSNKLFTEPIKLEPVKEYTFKTSMRVKPSASLKLHHDLKLCLGDHSSVPVALKGQGPFTLTYDIIETFSSKRKTFEIKEIKTNEYVIKTPVFTTGGDYILSLVSIKDSTGCVVGLSQPDAKIQVRRDIPSAAFNFFEPIKEAKIKHGSVTEIPLKLSGEGPFTVKFKHMDYDGNIVKEFENKFQNSYKPALKVSKEGLYQLVDIRDSSCQGNVIYRNSLYKVSFLEKPKFAIQDNHHITKVTENLFSKEEVCQGMEGTVDLALFGSPPFILEYDLMAPNGHISTKKIQVATKYASLKLPNQIPGEYITTIKAIFDGNYGESDIHFREHQSELIIKQTVHPIPDVAFADGGKTLRACAANVDQISFLEPINLKFLQGESPFSITFSVYHESTSRTDQYTIDNIDSENFSFEKLYEGMKLGNHAITIDSVVDANGCVNSLISGPRNQILVSITDAPKIHILDPSTEYCVGDYVAYQLNGVAPFMIKYEFNGIPLKSKERSSQFVRLASEPGIISITSLQDSSSQCIVDFTNPKLKSEFDDLSLNIHPIPSVTVSQGNYVTEDIREGDQAEVIFSFEGTPPFSLTYVRTEETDGKHGKRRSQVVETHKVTDIYSHEYKVITSLQGTYEAIEITDAYCFAKNDLFFNN.

The segment at 1-48 (MEHRYNVFNDTPRGNHWMGSSVSGSPRPSYSSRPNVNTTRRFQYSDDE) is disordered. At 1–110 (MEHRYNVFND…TDVLEISKQR (110 aa)) the chain is on the cytoplasmic side. Positions 1–175 (MEHRYNVFND…SFNIPRLTFK (175 aa)) are pore side. Positions 19–37 (GSSVSGSPRPSYSSRPNVN) are enriched in low complexity. 2 positions are modified to phosphoserine: Ser-45 and Ser-60. A helical membrane pass occupies residues 111–131 (TFAVILFLIIQCYKIYDLVIL). At 132–148 (KSGLPLSGLLFKNYRFN) the chain is on the perinuclear space side. The helical transmembrane segment at 149–169 (FISKYFIIDSFFLYVLPSFNI) threads the bilayer. The Cytoplasmic segment spans residues 170 to 172 (PRL). The helical transmembrane segment at 173–193 (TFKPWVVYLQILAMLLLNIFI) threads the bilayer. The Perinuclear space segment spans residues 194–1337 (SSDHEFVLIS…FAKNDLFFNN (1144 aa)). Residues 196-1337 (DHEFVLISLI…FAKNDLFFNN (1142 aa)) form a cisternal side region. Asn-280 carries an N-linked (GlcNAc...) asparagine glycan. Repeat copies occupy residues 390–413 (DRCI…KLAY), 626–650 (DQCV…YYNT), 732–755 (KLCL…TLTY), 836–859 (KIKH…TVKF), 943–966 (EVCQ…ILEY), 1058–1077 (FLEP…SITF), 1157–1178 (EYCV…MIKY), and 1253–1276 (DIRE…SLTY). Positions 390-1276 (DRCIGDSDNV…EGTPPFSLTY (887 aa)) are 8 X 24 AA approximate repeats.

Component of the nuclear pore complex (NPC). NPC constitutes the exclusive means of nucleocytoplasmic transport. NPCs allow the passive diffusion of ions and small molecules and the active, nuclear transport receptor-mediated bidirectional transport of macromolecules such as proteins, RNAs, ribonucleoparticles (RNPs), and ribosomal subunits across the nuclear envelope. Due to its 8-fold rotational symmetry, all subunits are present with 8 copies or multiples thereof. Interacts with NUP188. In terms of processing, the N-terminus is blocked. Post-translationally, phosphorylated by CDC28.

It localises to the nucleus. Its subcellular location is the nuclear pore complex. The protein localises to the nucleus membrane. In terms of biological role, functions as a component of the nuclear pore complex (NPC). NPC components, collectively referred to as nucleoporins (NUPs), can play the role of both NPC structural components and of docking or interaction partners for transiently associated nuclear transport factors. POM152 is important for the de novo assembly of NPCs. The protein is Nucleoporin POM152 (POM152) of Saccharomyces cerevisiae (strain ATCC 204508 / S288c) (Baker's yeast).